Reading from the N-terminus, the 325-residue chain is Flavin-dependent thymidylate synthase (325 aa).

The ThyX domain occupies 12 to 267 (ISVRLLEYTG…PRLFRWAGPS (256 aa)). FAD is bound by residues S65, 89–91 (RHR), and Q97. Residues 86-89 (QLVR) and 97-101 (QLSHR) each bind dUMP. A ThyX motif motif is present at residues 89-99 (RHRVASYTQLS). The insert stretch occupies residues 110 to 159 (AALKACESIGLDCPSKPAETEGGRKAAYRLYSQALERAARDFGASERFAI). DUMP is bound at residue R205. 221–223 (NAR) lines the FAD pocket. R233 provides a ligand contact to dUMP. Residue R233 is the Involved in ionization of N3 of dUMP, leading to its activation of the active site.

It belongs to the thymidylate synthase ThyX family. As to quaternary structure, homotetramer. FAD is required as a cofactor.

It carries out the reaction dUMP + (6R)-5,10-methylene-5,6,7,8-tetrahydrofolate + NADPH + H(+) = dTMP + (6S)-5,6,7,8-tetrahydrofolate + NADP(+). The protein operates within pyrimidine metabolism; dTTP biosynthesis. Functionally, catalyzes the reductive methylation of 2'-deoxyuridine-5'-monophosphate (dUMP) to 2'-deoxythymidine-5'-monophosphate (dTMP) while utilizing 5,10-methylenetetrahydrofolate (mTHF) as the methyl donor, and NADPH and FADH(2) as the reductant. In Aeropyrum pernix (strain ATCC 700893 / DSM 11879 / JCM 9820 / NBRC 100138 / K1), this protein is Flavin-dependent thymidylate synthase.